Here is a 244-residue protein sequence, read N- to C-terminus: Nicotinamidase 1 (244 aa).

The protein belongs to the isochorismatase family. Expressed in roots and stems, and at lower levels in flowers, siliques and leaves.

It carries out the reaction nicotinamide + H2O = nicotinate + NH4(+). The protein operates within cofactor biosynthesis; nicotinate biosynthesis; nicotinate from nicotinamide: step 1/1. Functionally, catalyzes the deamidation of nicotinamide, an early step in the NAD(+) salvage pathway. Prevents the accumulation of intracellular nicotinamide, a known inhibitor of poly(ADP-ribose) polymerases (PARP enzymes). The chain is Nicotinamidase 1 from Arabidopsis thaliana (Mouse-ear cress).